The sequence spans 1202 residues: CHD3-type chromatin-remodeling factor CHR7 (1202 aa).

Chromo domains follow at residues 45-109 (GEIE…HPHL) and 142-201 (KTVD…RDKY). A Helicase ATP-binding domain is found at 237-405 (RYSWSKKTNV…FALMHFLDAD (169 aa)). Residue 250–257 (DEMGLGKT) participates in ATP binding. Positions 356-359 (DEGH) match the DEAH box motif. The Helicase C-terminal domain occupies 528–679 (LLDKMMVKLK…HLVVGKQHLC (152 aa)). Residues 838-872 (TSDEEEEADEPEAARQRKPRTVTRPYRKRARDNSE) are disordered. The segment covering 853–867 (QRKPRTVTRPYRKRA) has biased composition (basic residues).

The protein belongs to the SNF2/RAD54 helicase family.

Its subcellular location is the nucleus. Functionally, chromatin remodeling factor that represses the expression of embryonic trait genes upon and after seed germination and thus enables the developmental switch to post-germinative growth. This is CHD3-type chromatin-remodeling factor CHR7 from Arabidopsis thaliana (Mouse-ear cress).